A 358-amino-acid polypeptide reads, in one-letter code: Protein SGT1 homolog B (358 aa).

TPR repeat units lie at residues 2-35 (AKEL…DPNC), 37-69 (AFFA…EPTL), and 70-103 (AKAY…APNE). One can recognise a CS domain in the interval 157–246 (KPMFRHEFYQ…AEIITWASLE (90 aa)). The interval 255–275 (PKPNVSSALSQRPVYPSSKPA) is disordered. In terms of domain architecture, SGS spans 268–358 (VYPSSKPAKD…DGMELKKWEY (91 aa)).

The protein belongs to the SGT1 family. Interacts with RAR1 and HSP90-2. Interacts (via SGS domain) with HSC70-1 and HSC70-3.

The protein localises to the cytoplasm. The protein resides in the nucleus. Involved in plant innate immunity. Essential for race-specific resistance conferred by multiple R genes, including RPP7, recognizing different oomycete pathogen isolates like avirulent Hyaloperonospora arabidopsidis (downy mildew). Contributes additively with RAR1 to RPP5-dependent resistance. Not required for RPM1, RPS2, RPS4 and RPS5-mediated resistance. Functions as a negative regulator of RPS5 accumulation by assisting its degradation. May be involved in heat shock response by associating with HSC70-1 chaperone. Required for the SCF(TIR1)-mediated degradation of Aux/IAA proteins, but maybe not for SCF(TIR1) assembly or binding to its Aux/IAA substrates. Probably required for SCF-mediated ubiquitination, by coupling HSP90 to SCF complex for ubiquitination of HSP90 client proteins. Required for the coronatine/jasmonic acid-mediated signal transduction pathway. In Arabidopsis thaliana (Mouse-ear cress), this protein is Protein SGT1 homolog B.